The chain runs to 157 residues: Cyclic pyranopterin monophosphate synthase (157 aa).

Substrate is bound by residues 74 to 76 (MCH) and 112 to 113 (ME). D127 is an active-site residue.

The protein belongs to the MoaC family. In terms of assembly, homohexamer; trimer of dimers.

It carries out the reaction (8S)-3',8-cyclo-7,8-dihydroguanosine 5'-triphosphate = cyclic pyranopterin phosphate + diphosphate. It functions in the pathway cofactor biosynthesis; molybdopterin biosynthesis. Its function is as follows. Catalyzes the conversion of (8S)-3',8-cyclo-7,8-dihydroguanosine 5'-triphosphate to cyclic pyranopterin monophosphate (cPMP). The polypeptide is Cyclic pyranopterin monophosphate synthase (Campylobacter jejuni subsp. jejuni serotype O:6 (strain 81116 / NCTC 11828)).